Consider the following 164-residue polypeptide: Lipoprotein signal peptidase (164 aa).

Helical transmembrane passes span 68 to 88 (TILV…LWNA) and 96 to 116 (FWGL…RAMF). Catalysis depends on residues Asp-121 and Asp-139. The helical transmembrane segment at 134–154 (TFNVADSAIVVGSCLLLIDLL) threads the bilayer.

It belongs to the peptidase A8 family.

The protein resides in the cell inner membrane. The enzyme catalyses Release of signal peptides from bacterial membrane prolipoproteins. Hydrolyzes -Xaa-Yaa-Zaa-|-(S,diacylglyceryl)Cys-, in which Xaa is hydrophobic (preferably Leu), and Yaa (Ala or Ser) and Zaa (Gly or Ala) have small, neutral side chains.. It participates in protein modification; lipoprotein biosynthesis (signal peptide cleavage). In terms of biological role, this protein specifically catalyzes the removal of signal peptides from prolipoproteins. This is Lipoprotein signal peptidase from Solibacter usitatus (strain Ellin6076).